Reading from the N-terminus, the 890-residue chain is Agglutinin-like protein ARB_02240 (890 aa).

An N-terminal signal peptide occupies residues 1–20 (MRLTTSVLLWAATSVLQADA). N-linked (GlcNAc...) asparagine glycans are attached at residues Asn-106, Asn-217, Asn-583, and Asn-654. Residues 680-872 (IPSGPTTRPE…GGAGSLSPST (193 aa)) form a disordered region. Composition is skewed to low complexity over residues 693 to 753 (TSST…TDSS) and 760 to 790 (TTST…HSST). Positions 791 to 802 (GSDPESTNTRHP) are enriched in polar residues. 2 stretches are compositionally biased toward low complexity: residues 803-812 (SSTASGSTTT) and 821-837 (SSSS…TATT). The span at 838–848 (TGGGSIPGSGT) shows a compositional bias: gly residues. Gly-864 carries GPI-anchor amidated glycine lipidation. The propeptide at 865-890 (AGSLSPSTWGKVVTCISSMALLVAFI) is removed in mature form.

This sequence belongs to the ALS family. Post-translationally, the GPI-anchor is attached to the protein in the endoplasmic reticulum and serves to target the protein to the cell surface. There, the glucosamine-inositol phospholipid moiety is cleaved off and the GPI-modified mannoprotein is covalently attached via its lipidless GPI glycan remnant to the 1,6-beta-glucan of the outer cell wall layer.

Its subcellular location is the secreted. It localises to the cell membrane. The protein resides in the cell wall. Functionally, cell surface adhesion protein which mediates cell agglutination and host tissue adherence. The protein is Agglutinin-like protein ARB_02240 of Arthroderma benhamiae (strain ATCC MYA-4681 / CBS 112371) (Trichophyton mentagrophytes).